The sequence spans 436 residues: Zinc finger protein 101 (436 aa).

The KRAB domain maps to 4–82; sequence VAFEDVAVNF…RKEGNEHRET (79 aa). The C2H2-type 1 zinc finger occupies 102 to 124; it reads CKCSVCGKVFLRHSFLDRHMRAH. A compositionally biased stretch (basic and acidic residues) spans 128–141; sequence KRSECGGEWRETPR. Positions 128–164 are disordered; that stretch reads KRSECGGEWRETPRKQKQHGKASISPSSGARRTVTPT. Residues 151 to 163 show a composition bias toward polar residues; sequence ISPSSGARRTVTP. A C2H2-type 2 zinc finger spans residues 169–191; that stretch reads YECKVCGKAFNSPNLFQIHQRTH. Residues 197–219 form a C2H2-type 3; degenerate zinc finger; it reads YKCREIVRAFTVSSFFRKHGKMH. 7 C2H2-type zinc fingers span residues 225-247, 253-276, 282-304, 310-332, 338-360, 366-388, and 394-416; these read YECK…VRTH, YKCK…IRSH, HQCQ…ERTH, YECQ…ERAH, YECN…KKTH, YECT…EMTH, and FDCK…ERTH.

This sequence belongs to the krueppel C2H2-type zinc-finger protein family. Expressed in a variety of adult and fetal tissues.

It localises to the nucleus. Its function is as follows. May be involved in transcriptional regulation. The polypeptide is Zinc finger protein 101 (ZNF101) (Homo sapiens (Human)).